A 143-amino-acid polypeptide reads, in one-letter code: Transcriptional regulator MraZ (143 aa).

SpoVT-AbrB domains are found at residues 5–47 (EYTH…PLIE) and 76–119 (ACEC…DAER).

The protein belongs to the MraZ family. In terms of assembly, forms oligomers.

It is found in the cytoplasm. It localises to the nucleoid. In Limosilactobacillus fermentum (strain NBRC 3956 / LMG 18251) (Lactobacillus fermentum), this protein is Transcriptional regulator MraZ.